A 233-amino-acid chain; its full sequence is H-2 class II histocompatibility antigen, A-S alpha chain (233 aa).

An alpha-1 region spans residues 1 to 88 (EDDIEADHVG…KRSNSTPATN (88 aa)). Over 1–195 (EDDIEADHVG…IPAPMSELTE (195 aa)) the chain is Extracellular. Positions 89-182 (EAPQATVFPK…GLEEPVLKHW (94 aa)) are alpha-2. In terms of domain architecture, Ig-like C1-type spans 91–183 (PQATVFPKSP…LEEPVLKHWE (93 aa)). An intrachain disulfide couples Cys-111 to Cys-167. N-linked (GlcNAc...) asparagine glycosylation occurs at Asn-122. The tract at residues 183-195 (EPEIPAPMSELTE) is connecting peptide. The chain crosses the membrane as a helical span at residues 196 to 221 (TVVCALGLSVGLVGIVVGTIFIIQGL). At 222–233 (RSGGTSRHPGPL) the chain is on the cytoplasmic side.

This sequence belongs to the MHC class II family.

The protein localises to the membrane. The polypeptide is H-2 class II histocompatibility antigen, A-S alpha chain (H2-Aa) (Mus musculus (Mouse)).